The sequence spans 197 residues: Imidazoleglycerol-phosphate dehydratase (197 aa).

This sequence belongs to the imidazoleglycerol-phosphate dehydratase family.

It is found in the cytoplasm. It carries out the reaction D-erythro-1-(imidazol-4-yl)glycerol 3-phosphate = 3-(imidazol-4-yl)-2-oxopropyl phosphate + H2O. It participates in amino-acid biosynthesis; L-histidine biosynthesis; L-histidine from 5-phospho-alpha-D-ribose 1-diphosphate: step 6/9. This chain is Imidazoleglycerol-phosphate dehydratase, found in Thermobifida fusca (strain YX).